We begin with the raw amino-acid sequence, 2784 residues long: Cilia- and flagella-associated protein 46 (2784 aa).

A TPR 1 repeat occupies 129 to 162 (GLEVAAANQPRYQFLVYNASVHHWRVVAPLHRDG). A coiled-coil region spans residues 242-268 (TAAAAKLTELQKDVARLQVHLATLAAA). A TPR 2 repeat occupies 401–434 (SLAPVVVAAHVKALEQLEDVLTTFTKLADVEGIH). Disordered regions lie at residues 543–562 (SAEPANPEEEAVSLIERSKE) and 581–607 (RDLPHPPPPAPTDPPGPDRDAAHAAAR). Pro residues predominate over residues 585–595 (HPPPPAPTDPP). The stretch at 644–665 (AVDREMVLLQAQLAHYEAEAAI) forms a coiled coil. A disordered region spans residues 670-697 (RRRADISPPTRPSPPEVDGEGVRQPPAT). Residues 708–743 (ASVRSMRGAMSVNEPWLTLNNAVQLYNAALPLMQQH) form a TPR 3 repeat. 2 disordered regions span residues 799–837 (DAGQELEDDDDEDSLDEDGNPPPAGDAGPHFNRRSPAYK) and 929–954 (RVNEEKQPAGAGAEKGGGDKGRKPHG). Residues 802 to 817 (QELEDDDDEDSLDEDG) show a composition bias toward acidic residues. A TPR 4 repeat occupies 976–1009 (LELWAKMARAVADAGVWPAALECSAAALAALPGA). Residues 1275 to 1288 (TGDLDGDGTDDEDD) are compositionally biased toward acidic residues. Disordered regions lie at residues 1275–1351 (TGDL…RVPE) and 1640–1673 (AAGGGRGGRESPSPHDDGIHYIGGPAPGDSHGQL). Residues 1298–1311 (SGGGSSSGRAGGGF) are compositionally biased toward gly residues. A compositionally biased stretch (basic and acidic residues) spans 1646 to 1658 (GGRESPSPHDDGI). TPR repeat units lie at residues 1712 to 1745 (HDVWLKKGDYLLRRGHYAAARQLLSRARAHAADC) and 1854 to 1886 (MEMLRGQGVSTWRKSYDGAVTLVNQAIMALAAR). Residues 1961–1984 (RLAEVQLAAAEERERLAGADREKA) adopt a coiled-coil conformation. Disordered stretches follow at residues 2068–2112 (RPFV…EAAA), 2278–2303 (ATAEPTPPLNAEKSKKKTDASAPAAA), 2346–2389 (AAKG…PGAA), and 2441–2465 (LPLPPPGSPDGKKEKKDKKEAAGPT). The span at 2069–2083 (PFVPPPKPPGAPKRP) shows a compositional bias: pro residues. A compositionally biased stretch (acidic residues) spans 2087–2096 (AEEEEDEEGP). Low complexity predominate over residues 2097–2112 (DTAAADAAAEAAEAAA). Residues 2378–2389 (SKQGPKSGPGAA) show a composition bias toward low complexity. Basic and acidic residues predominate over residues 2450 to 2461 (DGKKEKKDKKEA). The stretch at 2613-2646 (ATGGPCTGLLFLGVGRFAAHVPPAVLASAPLGGC) is one TPR 7 repeat.

This sequence belongs to the CFAP46 family. As to quaternary structure, part of the PDCP1 complex composed of CFAP46, CFAP54, CFAP74 and CFAP221; the PDCP1 complex binds calmodulin.

It localises to the cytoplasm. The protein resides in the cytoskeleton. The protein localises to the cilium axoneme. Functionally, as part of the central apparatus of the cilium axoneme plays a role in cilium movement and thereby cell motility. The protein is Cilia- and flagella-associated protein 46 of Chlamydomonas reinhardtii (Chlamydomonas smithii).